A 152-amino-acid polypeptide reads, in one-letter code: 1,4-dihydroxy-2-naphthoyl-CoA hydrolase (152 aa).

Asp-20 is a catalytic residue.

This sequence belongs to the 4-hydroxybenzoyl-CoA thioesterase family. DHNA-CoA hydrolase subfamily.

The catalysed reaction is 1,4-dihydroxy-2-naphthoyl-CoA + H2O = 1,4-dihydroxy-2-naphthoate + CoA + H(+). It participates in cofactor biosynthesis; phylloquinone biosynthesis. Its pathway is quinol/quinone metabolism; 1,4-dihydroxy-2-naphthoate biosynthesis; 1,4-dihydroxy-2-naphthoate from chorismate: step 7/7. Its function is as follows. Catalyzes the hydrolysis of 1,4-dihydroxy-2-naphthoyl-CoA (DHNA-CoA) to 1,4-dihydroxy-2-naphthoate (DHNA), a reaction involved in phylloquinone (vitamin K1) biosynthesis. The protein is 1,4-dihydroxy-2-naphthoyl-CoA hydrolase of Synechococcus sp. (strain CC9311).